We begin with the raw amino-acid sequence, 300 residues long: Acetylglutamate kinase (300 aa).

Substrate contacts are provided by residues 73–74 (GG), Arg95, and Asn197.

The protein belongs to the acetylglutamate kinase family. ArgB subfamily.

The protein localises to the cytoplasm. The catalysed reaction is N-acetyl-L-glutamate + ATP = N-acetyl-L-glutamyl 5-phosphate + ADP. It functions in the pathway amino-acid biosynthesis; L-arginine biosynthesis; N(2)-acetyl-L-ornithine from L-glutamate: step 2/4. In terms of biological role, catalyzes the ATP-dependent phosphorylation of N-acetyl-L-glutamate. The chain is Acetylglutamate kinase from Bordetella pertussis (strain Tohama I / ATCC BAA-589 / NCTC 13251).